A 318-amino-acid chain; its full sequence is DNA-directed RNA polymerase subunit alpha (318 aa).

The alpha N-terminal domain (alpha-NTD) stretch occupies residues 1-227 (MTQFEIECLD…NLFSPLKTID (227 aa)). Residues 241 to 318 (HINQILIEEL…KEKTTKIYNK (78 aa)) are alpha C-terminal domain (alpha-CTD).

It belongs to the RNA polymerase alpha chain family. As to quaternary structure, in plastids the minimal PEP RNA polymerase catalytic core is composed of four subunits: alpha, beta, beta', and beta''. When a (nuclear-encoded) sigma factor is associated with the core the holoenzyme is formed, which can initiate transcription.

Its subcellular location is the plastid. It localises to the chloroplast. The catalysed reaction is RNA(n) + a ribonucleoside 5'-triphosphate = RNA(n+1) + diphosphate. DNA-dependent RNA polymerase catalyzes the transcription of DNA into RNA using the four ribonucleoside triphosphates as substrates. The sequence is that of DNA-directed RNA polymerase subunit alpha from Guillardia theta (Cryptophyte).